Reading from the N-terminus, the 382-residue chain is Histidinol-phosphate aminotransferase (382 aa).

Residue Lys215 is modified to N6-(pyridoxal phosphate)lysine. Residues 360–382 (NSNNIDNQSKTHSQTSSIRKGTI) are disordered.

The protein belongs to the class-II pyridoxal-phosphate-dependent aminotransferase family. Histidinol-phosphate aminotransferase subfamily. Homodimer. Pyridoxal 5'-phosphate is required as a cofactor.

The catalysed reaction is L-histidinol phosphate + 2-oxoglutarate = 3-(imidazol-4-yl)-2-oxopropyl phosphate + L-glutamate. It functions in the pathway amino-acid biosynthesis; L-histidine biosynthesis; L-histidine from 5-phospho-alpha-D-ribose 1-diphosphate: step 7/9. In Yersinia pseudotuberculosis serotype IB (strain PB1/+), this protein is Histidinol-phosphate aminotransferase.